The following is a 252-amino-acid chain: Short-chain dehydrogenase anuI (252 aa).

NADP(+)-binding residues include Leu-18, Asp-65, Asn-92, Tyr-171, Lys-175, and Thr-206. Tyr-171 serves as the catalytic Proton acceptor. The Proton donor role is filled by Tyr-171. The active-site Lowers pKa of active site Tyr is Lys-175.

This sequence belongs to the short-chain dehydrogenases/reductases (SDR) family.

Its function is as follows. Highly reducing polyketide synthase; part of the gene cluster that mediates the biosynthesis of annullatin D, an alkylated aromatic polyketide with a fused dihydrobenzofuran lactone ring system that exhibits potent agonistic activities toward the cannabinoid receptors. AnuI does not seem to play a role within the pathway. The annullatin backbone 2-hydroxymethyl-3-pentylphenol is assembled from one acetyl-CoA starter unit and 5 malonyl-CoA elongation units by cooperation of the highly reducing polyketide synthase anuA, the short-chain dehydrogenase anuB and the oxidoreductase anuC, before being hydroxylated at the C-5 alkyl chain by the cytochrome P450 monooxygenase anuE to form (8S)-annullatin E. The prenyltransferase anuH subsequently installs one isoprenyl group at the benzene ring to form (8S)-annullatin J. Enzymatic or nonenzymatic dihydro-benzofuran ring formation between the prenyl and the phenolic hydroxyl groups in (8S)-annullatin J results in two diastereomers (2S,9S)-annullatin H and compound 12. The intermediate (2S,9S)-annullatin H is then converted to (2S,9S)-annullatin D by the FAD-linked oxidoreductase anuG-catalyzed five-member lactone ring formation. The isomer 12 acts as a substrate for the short-chain dehydrogenase anuF and is oxidized to (2R)-annullatin F, which is subsequently acetylated by an acetyltransferase leading to (2R)-annullatin G formation. The remaining enzymes identified within the cluster, anuD, anuI and anuJ, seem not to be involved in annullatin biosynthesis. This Penicillium roqueforti (strain FM164) protein is Short-chain dehydrogenase anuI.